We begin with the raw amino-acid sequence, 231 residues long: DNA damage response protein C (231 aa).

Homodimer.

Its subcellular location is the cytoplasm. It is found in the nucleoid. Its function is as follows. Appears to contribute to D.radiodurans capacity to survive exposure to ionizing radiation. Likely functions as a DNA damage-induced nucleoid-associated protein (NAP) that contributes to the enhanced level of nucleoid compaction after irradiation by bridging DNA duplexes, thereby limiting the dispersion of the fragmented genome immediately after irradiation to facilitate subsequent DNA repair. In vitro, binds both ssDNA and dsDNA, and is able to compact circular DNA, circularize linear DNA, anneal complementary DNA strands and protect DNA from nucleases. The sequence is that of DNA damage response protein C from Deinococcus radiodurans (strain ATCC 13939 / DSM 20539 / JCM 16871 / CCUG 27074 / LMG 4051 / NBRC 15346 / NCIMB 9279 / VKM B-1422 / R1).